Consider the following 432-residue polypeptide: Short/branched chain specific acyl-CoA dehydrogenase, mitochondrial (432 aa).

Residues 1–33 constitute a mitochondrion transit peptide; the sequence is MEGLAVRLLRGSRLLRRNFPTCLSSWKIPPHVS. K70 carries the N6-acetyllysine; alternate modification. The residue at position 70 (K70) is an N6-succinyllysine; alternate. FAD contacts are provided by residues 174–183 and 207–209; these read FCLSEAGAGS and WIS. Position 183 (S183) interacts with substrate. S183 carries the post-translational modification Phosphoserine. 2 residues coordinate substrate: Y229 and Y283. Residue K284 is modified to N6-acetyllysine; alternate. N6-succinyllysine; alternate is present on K284. 291-294 provides a ligand contact to substrate; that stretch reads NEGR. Residues R319, Q330, and 387–391 each bind FAD; that span reads EWMGG. Catalysis depends on E414, which acts as the Proton acceptor. 416-418 is a binding site for FAD; that stretch reads ASN. K426 is modified (N6-acetyllysine).

It belongs to the acyl-CoA dehydrogenase family. In terms of assembly, homotetramer. FAD serves as cofactor.

Its subcellular location is the mitochondrion matrix. It carries out the reaction 2-methylbutanoyl-CoA + oxidized [electron-transfer flavoprotein] + H(+) = (2E)-2-methylbut-2-enoyl-CoA + reduced [electron-transfer flavoprotein]. The catalysed reaction is (2S)-2-methylbutanoyl-CoA + oxidized [electron-transfer flavoprotein] + H(+) = (2E)-2-methylbut-2-enoyl-CoA + reduced [electron-transfer flavoprotein]. The enzyme catalyses (2R)-2-methylbutanoyl-CoA + oxidized [electron-transfer flavoprotein] + H(+) = ethylacryloyl-CoA + reduced [electron-transfer flavoprotein]. It catalyses the reaction butanoyl-CoA + oxidized [electron-transfer flavoprotein] + H(+) = (2E)-butenoyl-CoA + reduced [electron-transfer flavoprotein]. It carries out the reaction 2-methylpropanoyl-CoA + oxidized [electron-transfer flavoprotein] + H(+) = 2-methylpropenoyl-CoA + reduced [electron-transfer flavoprotein]. The catalysed reaction is hexanoyl-CoA + oxidized [electron-transfer flavoprotein] + H(+) = (2E)-hexenoyl-CoA + reduced [electron-transfer flavoprotein]. The enzyme catalyses valproyl-CoA + oxidized [electron-transfer flavoprotein] + H(+) = (2E)-2-propylpent-2-enoyl-CoA + reduced [electron-transfer flavoprotein]. It functions in the pathway lipid metabolism; mitochondrial fatty acid beta-oxidation. It participates in amino-acid degradation; L-isoleucine degradation. Its function is as follows. Short and branched chain specific acyl-CoA dehydrogenase that catalyzes the removal of one hydrogen from C-2 and C-3 of the fatty acyl-CoA thioester, resulting in the formation of trans-2-enoyl-CoA. Among the different mitochondrial acyl-CoA dehydrogenases, acts specifically on short and branched chain acyl-CoA derivatives such as (S)-2-methylbutyryl-CoA as well as short straight chain acyl-CoAs such as butyryl-CoA. Plays an important role in the metabolism of L-isoleucine by catalyzing the dehydrogenation of 2-methylbutyryl-CoA, one of the steps of the L-isoleucine catabolic pathway. Can also act on valproyl-CoA, a metabolite of the valproic acid drug. In Pongo abelii (Sumatran orangutan), this protein is Short/branched chain specific acyl-CoA dehydrogenase, mitochondrial (ACADSB).